Reading from the N-terminus, the 299-residue chain is Tryptophan prenyltransferase ComQ (299 aa).

Positions 67 and 71 each coordinate Mg(2+).

Belongs to the FPP/GGPP synthase family. Requires Mg(2+) as cofactor.

The protein localises to the cell membrane. The catalysed reaction is L-tryptophyl-[protein] + (2E,6E)-farnesyl diphosphate = (2S,3R)-3-farnesyl-2,3-dihydro-2,N(alpha)-cyclo-L-tryptophyl-[protein] + diphosphate. Functionally, part of a major quorum-sensing system that regulates the development of genetic competence. Involved in the maturation of the competence pheromone ComX. Acts by catalyzing the transfer of a farnesyl group on the ComX pheromone. Shows weak geranylation activity with geranyl diphosphate (GPP). This Bacillus subtilis (strain 168) protein is Tryptophan prenyltransferase ComQ.